A 415-amino-acid chain; its full sequence is Gamma-glutamyl phosphate reductase (415 aa).

It belongs to the gamma-glutamyl phosphate reductase family.

The protein localises to the cytoplasm. It carries out the reaction L-glutamate 5-semialdehyde + phosphate + NADP(+) = L-glutamyl 5-phosphate + NADPH + H(+). Its pathway is amino-acid biosynthesis; L-proline biosynthesis; L-glutamate 5-semialdehyde from L-glutamate: step 2/2. Its function is as follows. Catalyzes the NADPH-dependent reduction of L-glutamate 5-phosphate into L-glutamate 5-semialdehyde and phosphate. The product spontaneously undergoes cyclization to form 1-pyrroline-5-carboxylate. This is Gamma-glutamyl phosphate reductase from Clostridium perfringens (strain SM101 / Type A).